Consider the following 504-residue polypeptide: Glutamate--tRNA ligase (504 aa).

The short motif at 14 to 24 (PSPTGYLHVGG) is the 'HIGH' region element. The short motif at 261–265 (KLSKR) is the 'KMSKS' region element. ATP is bound at residue Lys264.

It belongs to the class-I aminoacyl-tRNA synthetase family. Glutamate--tRNA ligase type 1 subfamily. As to quaternary structure, monomer.

Its subcellular location is the cytoplasm. It carries out the reaction tRNA(Glu) + L-glutamate + ATP = L-glutamyl-tRNA(Glu) + AMP + diphosphate. In terms of biological role, catalyzes the attachment of glutamate to tRNA(Glu) in a two-step reaction: glutamate is first activated by ATP to form Glu-AMP and then transferred to the acceptor end of tRNA(Glu). This Chlorobium luteolum (strain DSM 273 / BCRC 81028 / 2530) (Pelodictyon luteolum) protein is Glutamate--tRNA ligase.